We begin with the raw amino-acid sequence, 100 residues long: Signal recognition particle 19 kDa protein (100 aa).

The protein belongs to the SRP19 family. Part of the signal recognition particle protein translocation system, which is composed of SRP and FtsY. Archaeal SRP consists of a 7S RNA molecule of 300 nucleotides and two protein subunits: SRP54 and SRP19.

It is found in the cytoplasm. Its function is as follows. Involved in targeting and insertion of nascent membrane proteins into the cytoplasmic membrane. Binds directly to 7S RNA and mediates binding of the 54 kDa subunit of the SRP. The sequence is that of Signal recognition particle 19 kDa protein from Pyrococcus furiosus (strain ATCC 43587 / DSM 3638 / JCM 8422 / Vc1).